The primary structure comprises 162 residues: NADH-quinone oxidoreductase subunit I (162 aa).

4Fe-4S ferredoxin-type domains lie at 53 to 83 and 93 to 122; these read LRRY…IDSA and TRYD…ETHI. Positions 63, 66, 69, 73, 102, 105, 108, and 112 each coordinate [4Fe-4S] cluster.

Belongs to the complex I 23 kDa subunit family. NDH-1 is composed of 14 different subunits. Subunits NuoA, H, J, K, L, M, N constitute the membrane sector of the complex. Requires [4Fe-4S] cluster as cofactor.

The protein resides in the cell inner membrane. The enzyme catalyses a quinone + NADH + 5 H(+)(in) = a quinol + NAD(+) + 4 H(+)(out). Functionally, NDH-1 shuttles electrons from NADH, via FMN and iron-sulfur (Fe-S) centers, to quinones in the respiratory chain. The immediate electron acceptor for the enzyme in this species is believed to be ubiquinone. Couples the redox reaction to proton translocation (for every two electrons transferred, four hydrogen ions are translocated across the cytoplasmic membrane), and thus conserves the redox energy in a proton gradient. In Xanthomonas axonopodis pv. citri (strain 306), this protein is NADH-quinone oxidoreductase subunit I.